We begin with the raw amino-acid sequence, 58 residues long: Small ribosomal subunit protein bS21A (58 aa).

Residues 38–58 form a disordered region; the sequence is YEKPSLRRKRKAEAARKGGRN. Basic and acidic residues predominate over residues 49–58; sequence AEAARKGGRN.

This sequence belongs to the bacterial ribosomal protein bS21 family.

This chain is Small ribosomal subunit protein bS21A, found in Trichormus variabilis (strain ATCC 29413 / PCC 7937) (Anabaena variabilis).